Reading from the N-terminus, the 335-residue chain is tRNA N6-adenosine threonylcarbamoyltransferase (335 aa).

Residues H110 and H114 each contribute to the Fe cation site. Residues 132-136, D165, G178, and N271 contribute to the substrate site; that span reads LVSGG. Residue D299 coordinates Fe cation.

The protein belongs to the KAE1 / TsaD family. It depends on Fe(2+) as a cofactor.

It is found in the cytoplasm. The catalysed reaction is L-threonylcarbamoyladenylate + adenosine(37) in tRNA = N(6)-L-threonylcarbamoyladenosine(37) in tRNA + AMP + H(+). Its function is as follows. Required for the formation of a threonylcarbamoyl group on adenosine at position 37 (t(6)A37) in tRNAs that read codons beginning with adenine. Is involved in the transfer of the threonylcarbamoyl moiety of threonylcarbamoyl-AMP (TC-AMP) to the N6 group of A37, together with TsaE and TsaB. TsaD likely plays a direct catalytic role in this reaction. The protein is tRNA N6-adenosine threonylcarbamoyltransferase of Campylobacter jejuni subsp. jejuni serotype O:6 (strain 81116 / NCTC 11828).